We begin with the raw amino-acid sequence, 441 residues long: MFS-type transporter (441 aa).

The segment at 1-47 is disordered; it reads MPPQQEQDTDSDAIRSYNEESKSETPGCIPDAMLSSDETSNDVASDI. 10 consecutive transmembrane segments (helical) span residues 61 to 81, 95 to 115, 125 to 145, 150 to 170, 183 to 203, 212 to 232, 259 to 279, 289 to 309, 323 to 343, and 351 to 371; these read TLCG…FGIF, DISW…AFVG, LVLS…SLST, LILS…TPAV, LAIG…NSMA, FGWT…FVVV, FFTI…YYIA, TLTY…GVFG, LELL…WIAV, and VWTV…PAGI. The N-linked (GlcNAc...) asparagine glycan is linked to asparagine 388. The next 2 helical transmembrane spans lie at 389–409 and 415–435; these read FTVI…IITA and YGAQ…IVAA.

Belongs to the major facilitator superfamily. Monocarboxylate porter (TC 2.A.1.13) family.

Its subcellular location is the membrane. Its function is as follows. MFS-type transporter; part of the gene cluster that mediates the biosynthesis of butenolide, a mycotoxin that shows antibiotic activity but does not seem to play a major role in the spread of head blight in wheat. The chain is MFS-type transporter from Gibberella zeae (strain ATCC MYA-4620 / CBS 123657 / FGSC 9075 / NRRL 31084 / PH-1) (Wheat head blight fungus).